A 1173-amino-acid chain; its full sequence is SMC5-SMC6 complex localization factor protein 2 (1173 aa).

The tract at residues 1 to 109 (MTRRCMPARP…KPKRVPPEKS (109 aa)) is disordered. Composition is skewed to basic and acidic residues over residues 39-50 (KRTESPGDRKQS) and 88-106 (QFER…RVPP). Residues 137-149 (SLASKYLAKGTNI) carry the APIM motif motif. 5 disordered regions span residues 161–230 (MKSL…PEES), 256–275 (QMEQ…SLSL), 280–373 (ERKY…QKEK), 394–620 (KEPS…EEET), and 635–663 (TPAA…VHPG). Positions 181 to 199 (ENNEKNDRDRGKTNADSKK) are enriched in basic and acidic residues. Composition is skewed to low complexity over residues 212–221 (SSRSLSSRSS) and 262–275 (NSEN…SLSL). Residues 280 to 293 (ERKYKPRQEQRKQN) show a composition bias toward basic and acidic residues. Residues 317–330 (SDSWEPTSAGSKQN) show a composition bias toward polar residues. Basic and acidic residues-rich tracts occupy residues 339–349 (NSVDSDLKSTR) and 355–373 (KARE…QKEK). Residues 409 to 428 (PSNSGNSGHHSTRNSDQIQV) show a composition bias toward polar residues. Ser481 carries the phosphoserine modification. Residues 499 to 520 (SKKDKERSSSKECSGHSTESTK) are compositionally biased toward basic and acidic residues. The span at 571–592 (APSDKAPSEGESSGNSNAGSSA) shows a compositional bias: low complexity. Residues 602-619 (DSDEESLGYNLDSDEEEE) are compositionally biased toward acidic residues. 3 positions are modified to phosphoserine: Ser603, Ser607, and Ser614. Positions 635–1173 (TPAATGKPPA…QLHDFWVPDS (539 aa)) are interaction with SIMC1. The segment at 664–1166 (TYTNTLERLV…NCRPTQGQLH (503 aa)) is NSE6-like domain. Residues 702–1173 (PIRIGEEDST…QLHDFWVPDS (472 aa)) form a required for interaction with SLF1 and RAD18 region.

This sequence belongs to the FAM178 family. As to quaternary structure, forms a heterodimer with SIMC1. Interacts with SLF1 (via N-terminus); this interaction links RAD18 to the SMC5-SMC6 complex. Interacts with RAD18; this interaction is increased in a SLF1-dependent manner. Interacts with SMC5 and SMC6. In terms of tissue distribution, widely expressed. Expressed at higher level in skeletal muscle and at slightly lower level in brain, liver and heart, than in lung, kidney, spleen and thymus.

The protein localises to the nucleus. The protein resides in the PML body. In terms of biological role, plays a role in the DNA damage response (DDR) pathway by regulating postreplication repair of UV-damaged DNA and genomic stability maintenance. The SLF1-SLF2 complex acts to link RAD18 with the SMC5-SMC6 complex at replication-coupled interstrand cross-links (ICL) and DNA double-strand breaks (DSBs) sites on chromatin during DNA repair in response to stalled replication forks. Promotes the recruitment of the SMC5-SMC6 complex to DNA lesions. Plays a role in SMC5-SMC6 complex recruitment for viral restriction. Forms a complex with SIMC1 and this complex is required to recruit SMC5-SMC6 complex to PML nuclear bodies and sites of viral replication. The chain is SMC5-SMC6 complex localization factor protein 2 from Homo sapiens (Human).